Here is an 829-residue protein sequence, read N- to C-terminus: Periplasmic nitrate reductase (829 aa).

The tat-type signal signal peptide spans 1-30 (MKLSRRDFMKANAVAAAAAVAGVSAPTLAA). A 4Fe-4S Mo/W bis-MGD-type domain is found at 41–97 (ITWDKAPCRFCGTGCSVLVGSQDGRVVATQGDPDAPVNRGLNCIKGYFLSKIMYGQD). The [4Fe-4S] cluster site is built by Cys48, Cys51, Cys55, and Cys83. Mo-bis(molybdopterin guanine dinucleotide) contacts are provided by residues Lys85, Gln152, Asn177, Cys181, 214–221 (WGSNMAEM), 245–249 (STFEH), 264–266 (QTD), Met374, Gln378, Asn484, 510–511 (SD), Lys533, Asp560, and 719–728 (TGRVLEHWHT). Phe795 contacts substrate. Asn803 and Lys820 together coordinate Mo-bis(molybdopterin guanine dinucleotide).

Belongs to the prokaryotic molybdopterin-containing oxidoreductase family. NasA/NapA/NarB subfamily. Component of the periplasmic nitrate reductase NapAB complex composed of NapA and NapB. Requires [4Fe-4S] cluster as cofactor. The cofactor is Mo-bis(molybdopterin guanine dinucleotide). Post-translationally, predicted to be exported by the Tat system. The position of the signal peptide cleavage has not been experimentally proven.

Its subcellular location is the periplasm. The enzyme catalyses 2 Fe(II)-[cytochrome] + nitrate + 2 H(+) = 2 Fe(III)-[cytochrome] + nitrite + H2O. Catalytic subunit of the periplasmic nitrate reductase complex NapAB. Receives electrons from NapB and catalyzes the reduction of nitrate to nitrite. In Aeromonas hydrophila subsp. hydrophila (strain ATCC 7966 / DSM 30187 / BCRC 13018 / CCUG 14551 / JCM 1027 / KCTC 2358 / NCIMB 9240 / NCTC 8049), this protein is Periplasmic nitrate reductase.